The chain runs to 436 residues: 3-ketoacyl-CoA thiolase (436 aa).

Catalysis depends on C99, which acts as the Acyl-thioester intermediate. Active-site proton acceptor residues include H392 and C422.

It belongs to the thiolase-like superfamily. Thiolase family. In terms of assembly, heterotetramer of two alpha chains (FadJ) and two beta chains (FadI).

The protein resides in the cytoplasm. The catalysed reaction is an acyl-CoA + acetyl-CoA = a 3-oxoacyl-CoA + CoA. The protein operates within lipid metabolism; fatty acid beta-oxidation. Catalyzes the final step of fatty acid oxidation in which acetyl-CoA is released and the CoA ester of a fatty acid two carbons shorter is formed. This Klebsiella pneumoniae (strain 342) protein is 3-ketoacyl-CoA thiolase.